Here is a 250-residue protein sequence, read N- to C-terminus: Biosynthetic peptidoglycan transglycosylase (250 aa).

A helical transmembrane segment spans residues 15 to 35; sequence AVLLFFVSSLGFVLLYRFVPV.

The protein belongs to the glycosyltransferase 51 family.

The protein localises to the cell inner membrane. The catalysed reaction is [GlcNAc-(1-&gt;4)-Mur2Ac(oyl-L-Ala-gamma-D-Glu-L-Lys-D-Ala-D-Ala)](n)-di-trans,octa-cis-undecaprenyl diphosphate + beta-D-GlcNAc-(1-&gt;4)-Mur2Ac(oyl-L-Ala-gamma-D-Glu-L-Lys-D-Ala-D-Ala)-di-trans,octa-cis-undecaprenyl diphosphate = [GlcNAc-(1-&gt;4)-Mur2Ac(oyl-L-Ala-gamma-D-Glu-L-Lys-D-Ala-D-Ala)](n+1)-di-trans,octa-cis-undecaprenyl diphosphate + di-trans,octa-cis-undecaprenyl diphosphate + H(+). It functions in the pathway cell wall biogenesis; peptidoglycan biosynthesis. Functionally, peptidoglycan polymerase that catalyzes glycan chain elongation from lipid-linked precursors. The polypeptide is Biosynthetic peptidoglycan transglycosylase (Bdellovibrio bacteriovorus (strain ATCC 15356 / DSM 50701 / NCIMB 9529 / HD100)).